A 426-amino-acid polypeptide reads, in one-letter code: Histidine--tRNA ligase (426 aa).

Belongs to the class-II aminoacyl-tRNA synthetase family. In terms of assembly, homodimer.

It is found in the cytoplasm. The catalysed reaction is tRNA(His) + L-histidine + ATP = L-histidyl-tRNA(His) + AMP + diphosphate + H(+). The sequence is that of Histidine--tRNA ligase from Streptococcus gordonii (strain Challis / ATCC 35105 / BCRC 15272 / CH1 / DL1 / V288).